The sequence spans 211 residues: Uracil phosphoribosyltransferase (211 aa).

5-phospho-alpha-D-ribose 1-diphosphate-binding positions include Arg-79, Arg-104, and Asp-131–Ser-139. Uracil contacts are provided by residues Ile-196 and Gly-201 to Ala-203. Asp-202 serves as a coordination point for 5-phospho-alpha-D-ribose 1-diphosphate.

It belongs to the UPRTase family. Requires Mg(2+) as cofactor.

The enzyme catalyses UMP + diphosphate = 5-phospho-alpha-D-ribose 1-diphosphate + uracil. It participates in pyrimidine metabolism; UMP biosynthesis via salvage pathway; UMP from uracil: step 1/1. Allosterically activated by GTP. Its function is as follows. Catalyzes the conversion of uracil and 5-phospho-alpha-D-ribose 1-diphosphate (PRPP) to UMP and diphosphate. This Limosilactobacillus fermentum (strain NBRC 3956 / LMG 18251) (Lactobacillus fermentum) protein is Uracil phosphoribosyltransferase.